We begin with the raw amino-acid sequence, 475 residues long: Aspartyl/glutamyl-tRNA(Asn/Gln) amidotransferase subunit B (475 aa).

It belongs to the GatB/GatE family. GatB subfamily. As to quaternary structure, heterotrimer of A, B and C subunits.

It carries out the reaction L-glutamyl-tRNA(Gln) + L-glutamine + ATP + H2O = L-glutaminyl-tRNA(Gln) + L-glutamate + ADP + phosphate + H(+). The catalysed reaction is L-aspartyl-tRNA(Asn) + L-glutamine + ATP + H2O = L-asparaginyl-tRNA(Asn) + L-glutamate + ADP + phosphate + 2 H(+). In terms of biological role, allows the formation of correctly charged Asn-tRNA(Asn) or Gln-tRNA(Gln) through the transamidation of misacylated Asp-tRNA(Asn) or Glu-tRNA(Gln) in organisms which lack either or both of asparaginyl-tRNA or glutaminyl-tRNA synthetases. The reaction takes place in the presence of glutamine and ATP through an activated phospho-Asp-tRNA(Asn) or phospho-Glu-tRNA(Gln). The chain is Aspartyl/glutamyl-tRNA(Asn/Gln) amidotransferase subunit B from Thermodesulfovibrio yellowstonii (strain ATCC 51303 / DSM 11347 / YP87).